Consider the following 382-residue polypeptide: Protein RecA (382 aa).

Positions 1-20 (MPADVKAAQSSAGDSRPGER) are disordered. An ATP-binding site is contributed by 79–86 (GPESSGKT). The segment covering 360–369 (SAAAKPSAKT) has biased composition (low complexity). Positions 360 to 382 (SAAAKPSAKTADTDKKLVADGAA) are disordered. The span at 370–382 (ADTDKKLVADGAA) shows a compositional bias: basic and acidic residues.

This sequence belongs to the RecA family.

It is found in the cytoplasm. Functionally, can catalyze the hydrolysis of ATP in the presence of single-stranded DNA, the ATP-dependent uptake of single-stranded DNA by duplex DNA, and the ATP-dependent hybridization of homologous single-stranded DNAs. It interacts with LexA causing its activation and leading to its autocatalytic cleavage. The protein is Protein RecA of Synechococcus sp. (strain CC9311).